A 514-amino-acid polypeptide reads, in one-letter code: Peptide chain release factor 3 (514 aa).

The 261-residue stretch at Lys8 to His268 folds into the tr-type G domain. GTP-binding positions include Ser17 to Thr24, Asp85 to His89, and Asn139 to Asp142.

Belongs to the TRAFAC class translation factor GTPase superfamily. Classic translation factor GTPase family. PrfC subfamily.

The protein resides in the cytoplasm. Functionally, increases the formation of ribosomal termination complexes and stimulates activities of RF-1 and RF-2. It binds guanine nucleotides and has strong preference for UGA stop codons. It may interact directly with the ribosome. The stimulation of RF-1 and RF-2 is significantly reduced by GTP and GDP, but not by GMP. This Streptococcus sanguinis (strain SK36) protein is Peptide chain release factor 3.